The primary structure comprises 226 residues: ATP-dependent dethiobiotin synthetase BioD (226 aa).

13–18 is a binding site for ATP; that stretch reads DVGKTV. Thr17 contacts Mg(2+). Lys38 is a catalytic residue. Residues Asp55, 116–119, and 176–177 contribute to the ATP site; these read EGAG and NR. Asp55 and Glu116 together coordinate Mg(2+).

The protein belongs to the dethiobiotin synthetase family. In terms of assembly, homodimer. The cofactor is Mg(2+).

The protein localises to the cytoplasm. The catalysed reaction is (7R,8S)-7,8-diammoniononanoate + CO2 + ATP = (4R,5S)-dethiobiotin + ADP + phosphate + 3 H(+). Its pathway is cofactor biosynthesis; biotin biosynthesis; biotin from 7,8-diaminononanoate: step 1/2. Its function is as follows. Catalyzes a mechanistically unusual reaction, the ATP-dependent insertion of CO2 between the N7 and N8 nitrogen atoms of 7,8-diaminopelargonic acid (DAPA, also called 7,8-diammoniononanoate) to form a ureido ring. The chain is ATP-dependent dethiobiotin synthetase BioD from Aliivibrio fischeri (strain MJ11) (Vibrio fischeri).